A 242-amino-acid polypeptide reads, in one-letter code: Purine nucleoside phosphorylase PA4543 (242 aa).

H69, C103, and H120 together coordinate Zn(2+).

Belongs to the purine nucleoside phosphorylase YfiH/LACC1 family. As to quaternary structure, homodimer. Cu(2+) serves as cofactor. It depends on Zn(2+) as a cofactor.

It catalyses the reaction adenosine + phosphate = alpha-D-ribose 1-phosphate + adenine. It carries out the reaction S-methyl-5'-thioadenosine + phosphate = 5-(methylsulfanyl)-alpha-D-ribose 1-phosphate + adenine. The enzyme catalyses inosine + phosphate = alpha-D-ribose 1-phosphate + hypoxanthine. The catalysed reaction is adenosine + H2O + H(+) = inosine + NH4(+). Functionally, purine nucleoside enzyme that catalyzes the phosphorolysis of adenosine and inosine nucleosides, yielding D-ribose 1-phosphate and the respective free bases, adenine and hypoxanthine. Also catalyzes the phosphorolysis of S-methyl-5'-thioadenosine into adenine and S-methyl-5-thio-alpha-D-ribose 1-phosphate. Also has adenosine deaminase activity. The polypeptide is Purine nucleoside phosphorylase PA4543 (Pseudomonas aeruginosa (strain ATCC 15692 / DSM 22644 / CIP 104116 / JCM 14847 / LMG 12228 / 1C / PRS 101 / PAO1)).